The following is a 599-amino-acid chain: NADH-ubiquinone oxidoreductase chain 5 (599 aa).

17 consecutive transmembrane segments (helical) span residues methionine 1–phenylalanine 21, phenylalanine 41–leucine 61, leucine 79–glutamate 99, phenylalanine 114–methionine 134, leucine 137–glycine 157, leucine 166–phenylalanine 186, isoleucine 198–glycine 218, threonine 237–isoleucine 257, isoleucine 269–leucine 289, isoleucine 297–glutamine 317, leucine 323–isoleucine 343, methionine 362–methionine 382, isoleucine 400–threonine 420, leucine 453–methionine 473, methionine 478–methionine 498, methionine 509–isoleucine 529, and glycine 578–methionine 598.

The protein belongs to the complex I subunit 5 family.

It is found in the mitochondrion inner membrane. The enzyme catalyses a ubiquinone + NADH + 5 H(+)(in) = a ubiquinol + NAD(+) + 4 H(+)(out). Its function is as follows. Core subunit of the mitochondrial membrane respiratory chain NADH dehydrogenase (Complex I) that is believed to belong to the minimal assembly required for catalysis. Complex I functions in the transfer of electrons from NADH to the respiratory chain. The immediate electron acceptor for the enzyme is believed to be ubiquinone. This is NADH-ubiquinone oxidoreductase chain 5 (ND5) from Geomys personatus (Texas pocket gopher).